The following is a 1270-amino-acid chain: Glycine betaine reductase ATRR (1270 aa).

The segment at 14 to 418 (FTQQVRASPN…MIKLRGYSVV (405 aa)) is adenylation (A) domain. Positions 528-605 (KEDPIGIEDI…GHLDTVRAIR (78 aa)) constitute a Carrier domain. Ser-565 is modified (O-(pantetheine 4'-phosphoryl)serine). Residues 643 to 937 (KTVLLTGVTG…EPLSWDDWVA (295 aa)) form a carboxylic acid reductase domain R1 region. The tract at residues 1026–1256 (PLSGKVAVVT…IYALRQPEHV (231 aa)) is aldehyde reductase domain R2.

Belongs to the NRP synthetase family.

Its activity is regulated as follows. The tetramethylammonium ion, which mimics the head group of glycine betaine, acts as a competitive inhibitor of ATRR A domain, whereas the potency decreased by three orders of magnitude with dimethylammonium. Choline is a mixed inhibitor for both glycine betaine reductase and aldehyde reductase activity but more potent in competition against glycine betaine in the first reduction step. Therefore, choline could act as a feedback inhibitor to regulate ATRR enzymatic activity. The lowered binding affinity of choline to R2 favors the release of choline after glycine betaine aldehyde reduction to avoid direct product inhibition. Its function is as follows. NRPS-like enzyme with an unusual domain architecture that converts back glycine betaine to choline via a 2-step reduction mechanism, and thereby can be an alternative source of choline. Permits direct reutilization of endogenously stored glycine betaine for on-demand biosynthesis of choline and choline derivatives, including phospholipid phosphatidylcholine (PC) which has an essential role in maintaining membrane integrity and functionality, or choline-O-sulfate, a mean for intracellular sulfate storage. Glycine betaine is activated by the adenylation (A) domain, and transferred to the thiolation (T) domain. Movement of the phosphopantetheine arm to the thioester reductase domain R1 then allows thioester reduction by NADPH of glycine betainoyl thioester to glycine betaine aldehyde, which is in turn reduced to choline by the aldehyde reductase domain R2. In Emericella nidulans (strain FGSC A4 / ATCC 38163 / CBS 112.46 / NRRL 194 / M139) (Aspergillus nidulans), this protein is Glycine betaine reductase ATRR.